The sequence spans 501 residues: Pentatricopeptide repeat-containing protein At4g16470 (501 aa).

8 PPR repeats span residues 107 to 141 (EPET…GFAL), 142 to 172 (NEYL…LKIR), 173 to 207 (DLIP…RIVP), 208 to 242 (DQYT…CIKS), 243 to 273 (NIIV…LSTR), 274 to 308 (NVIT…GCRP), 309 to 344 (NPVT…GIEP), and 345 to 379 (EGQH…EHPP). Positions 380-455 (VWGSLLGACR…DPGYSQIELQ (76 aa)) are type E motif. Residues 456-486 (GEVHRFMKDDTSHRLSEKIYKKVHEMTSFFM) are type E(+) motif.

This sequence belongs to the PPR family. PCMP-E subfamily.

The polypeptide is Pentatricopeptide repeat-containing protein At4g16470 (PCMP-E12) (Arabidopsis thaliana (Mouse-ear cress)).